A 267-amino-acid polypeptide reads, in one-letter code: Glutamate racemase (267 aa).

Residues 13-14 (DS) and 45-46 (YG) each bind substrate. The active-site Proton donor/acceptor is the Cys-77. 78-79 (NT) provides a ligand contact to substrate. The active-site Proton donor/acceptor is Cys-192. A substrate-binding site is contributed by 193-194 (TH).

The protein belongs to the aspartate/glutamate racemases family.

The catalysed reaction is L-glutamate = D-glutamate. It participates in cell wall biogenesis; peptidoglycan biosynthesis. In terms of biological role, provides the (R)-glutamate required for cell wall biosynthesis. The polypeptide is Glutamate racemase (Sinorhizobium fredii (strain NBRC 101917 / NGR234)).